The primary structure comprises 1546 residues: DNA-directed RNA polymerase subunit beta' (1546 aa).

The Zn(2+) site is built by cysteine 57, cysteine 59, cysteine 72, and cysteine 75. Mg(2+)-binding residues include aspartate 756, aspartate 758, and aspartate 760. Residues cysteine 1130, cysteine 1211, cysteine 1218, and cysteine 1221 each coordinate Zn(2+). Residues 1512-1546 (LEKYGEGSTSSDAVTGGQRYDDTRPGSSINPGYGD) are disordered. The segment covering 1536–1546 (PGSSINPGYGD) has biased composition (polar residues).

The protein belongs to the RNA polymerase beta' chain family. The RNAP catalytic core consists of 2 alpha, 1 beta, 1 beta' and 1 omega subunit. When a sigma factor is associated with the core the holoenzyme is formed, which can initiate transcription. Mg(2+) serves as cofactor. Requires Zn(2+) as cofactor.

It catalyses the reaction RNA(n) + a ribonucleoside 5'-triphosphate = RNA(n+1) + diphosphate. In terms of biological role, DNA-dependent RNA polymerase catalyzes the transcription of DNA into RNA using the four ribonucleoside triphosphates as substrates. The protein is DNA-directed RNA polymerase subunit beta' of Deinococcus radiodurans (strain ATCC 13939 / DSM 20539 / JCM 16871 / CCUG 27074 / LMG 4051 / NBRC 15346 / NCIMB 9279 / VKM B-1422 / R1).